Consider the following 459-residue polypeptide: MIKDPFARLGLEREVLTVSQLNGRARVLLEDVFSSIWVEGEISNLSRPASGHVYFTLKDSGAQVRCALFRQSAARVRQALKDGLQVKVRGKVSLFEGRGDYQLILDTVEPAGDGALRLAFDALKAKLSDEGLFSAERKIALPVHPQRIGIISSPTGAVIRDIISVFRRRAPRVELTLIPTAVQGREAINQIVRALKLADSRGFDALILARGGGSLEDLWCFNEEAVARAIDACVTPIVSAVGHETDVSISDFVADVRAPTPSAAAELLAPDSSDLHRRVDSLHRRLVSRMQDRLMRERLRLEGISRRLRHPGERLRQQSQRLDDLDMRLRRAFEQNMHQRQVRLAHMQSRLAAQHPGRTLGFLRQRLDALAERLPRAIREQIKARRLQLQSQAQTLNVVSPLATLGRGYSILLDERGHAIRNAAQTRTGQRLTARLGEGELQVRVEDNHLTPVTLSLLD.

Belongs to the XseA family. As to quaternary structure, heterooligomer composed of large and small subunits.

It localises to the cytoplasm. It carries out the reaction Exonucleolytic cleavage in either 5'- to 3'- or 3'- to 5'-direction to yield nucleoside 5'-phosphates.. Bidirectionally degrades single-stranded DNA into large acid-insoluble oligonucleotides, which are then degraded further into small acid-soluble oligonucleotides. This chain is Exodeoxyribonuclease 7 large subunit, found in Pseudomonas savastanoi pv. phaseolicola (strain 1448A / Race 6) (Pseudomonas syringae pv. phaseolicola (strain 1448A / Race 6)).